The primary structure comprises 271 residues: MAGLEVLFASAAPAITCRQDALVCFLHWEVVTHGYFGLGVGDQPGPNDKKSELLPAGWNNNKDLYVLRYEYKDGSRKLLVKAITVESSMILNVLEYGSQQVADLTLNLDDYIDAEHLGDFHRTYKNSEELRSRIVSGIITPIHEQWEKANVSSPHREFPPATAREVDPLRIPPHHPHTSRQPPWCDPLGPFVVGGEDLDPFGPRRGGMIVDPLRSGFPRALIDPSSGLPNRLPPGAVPPGARFDPFGPIGTSPPGPNPDHLPPPGYDDMYL.

At Ala-2 the chain carries N-acetylalanine. The tract at residues 2–150 is important for homodimerization and interaction with FBXO7; sequence AGLEVLFASA…PIHEQWEKAN (149 aa). The residue at position 153 (Ser-153) is a Phosphoserine. Residue Arg-205 is modified to Omega-N-methylarginine. Asymmetric dimethylarginine is present on Arg-219. The disordered stretch occupies residues 222 to 271; sequence IDPSSGLPNRLPPGAVPPGARFDPFGPIGTSPPGPNPDHLPPPGYDDMYL. At Arg-231 the chain carries Omega-N-methylarginine. The segment covering 251 to 265 has biased composition (pro residues); the sequence is TSPPGPNPDHLPPPG. Phosphoserine is present on Ser-252.

Belongs to the proteasome inhibitor PI31 family. Monomer and homodimer. Interacts with FBXO7. Interacts with the 20S proteasome.

The protein resides in the cytoplasm. Its subcellular location is the endoplasmic reticulum. In terms of biological role, plays an important role in control of proteasome function. Inhibits the hydrolysis of protein and peptide substrates by the 20S proteasome. Also inhibits the activation of the proteasome by the proteasome regulatory proteins PA700 and PA28. The sequence is that of Proteasome inhibitor PI31 subunit (PSMF1) from Homo sapiens (Human).